Here is a 647-residue protein sequence, read N- to C-terminus: A-type voltage-gated potassium channel KCND1 (647 aa).

Residues Met-1 to Thr-183 lie on the Cytoplasmic side of the membrane. Residues Ala-2–Leu-20 are interaction with KCNIP1, KCNIP2, and other family members. Zn(2+) contacts are provided by His-104, Cys-131, and Cys-132. Positions Ala-144–Pro-163 are disordered. A helical membrane pass occupies residues Ala-184–Val-205. At Glu-206–Ala-230 the chain is on the extracellular side. Residues Phe-231–Ala-252 form a helical membrane-spanning segment. Topologically, residues Ala-253–Val-263 are cytoplasmic. Residues Met-264–Asn-284 form a helical membrane-spanning segment. Residues Asp-285–Val-287 are Extracellular-facing. A helical; Voltage-sensor transmembrane segment spans residues Ser-288–His-308. Residues Ser-309–Ala-323 lie on the Cytoplasmic side of the membrane. The interval Gln-310–Ala-323 is S4-S5 linker. Residues Ser-324–Phe-345 traverse the membrane as a helical segment. The Extracellular segment spans residues Tyr-346–Ile-359. Residues Asn-352 and Asn-355 are each glycosylated (N-linked (GlcNAc...) asparagine). The helical intramembrane region spans Pro-360–Thr-371. The short motif at Thr-372–Asp-377 is the Selectivity filter element. An intramembrane segment occupies Thr-372–Val-379. Topologically, residues Pro-380–Lys-386 are extracellular. The helical transmembrane segment at Ile-387–Tyr-415 threads the bilayer. The Cytoplasmic segment spans residues His-416–Leu-647. Ser-458 carries the post-translational modification Phosphoserine. A required for dendritic targeting region spans residues Phe-474–Thr-489. A compositionally biased stretch (low complexity) spans Val-506–Gly-524. The disordered stretch occupies residues Val-506–Ser-531. Position 555 is a phosphoserine (Ser-555). The interval Ile-601–Thr-634 is disordered.

This sequence belongs to the potassium channel family. D (Shal) (TC 1.A.1.2) subfamily. Kv4.1/KCND1 sub-subfamily. As to quaternary structure, component of heteromultimeric potassium channels. Identified in potassium channel complexes containing KCND1, KCND2, KCND3, KCNIP1, KCNIP2, KCNIP3, KCNIP4, DPP6 and DPP10. As to expression, widely expressed. Highly expressed in brain, in particular in cerebellum and thalamus; detected at lower levels in the other parts of the brain.

The protein resides in the cell membrane. It catalyses the reaction K(+)(in) = K(+)(out). In terms of biological role, A-type voltage-gated potassium channel that mediates transmembrane potassium transport in excitable membranes in the brain. Mediates A-type current I(SA) in suprachiasmatic nucleus (SCN) neurons. Exhibits a low-threshold A-type current with a hyperpolarized steady-state inactivation midpoint and the recovery process was steeply voltage-dependent, with recovery being markedly faster at more negative potentials. May regulates repetitive firing rates in the suprachiasmatic nucleus (SCN) neurons and circadian rhythms in neuronal excitability and behavior. Contributes to the regulation of the circadian rhythm of action potential firing in suprachiasmatic nucleus neurons, which regulates the circadian rhythm of locomotor activity. The regulatory subunit KCNIP1 modulates the kinetics of channel inactivation, increases the current amplitudes and accelerates recovery from inactivation, shifts activation in a depolarizing direction. The regulatory subunit DPP10 decreases the voltage sensitivity of the inactivation channel gating. This is A-type voltage-gated potassium channel KCND1 from Homo sapiens (Human).